The primary structure comprises 341 residues: Phenylalanine--tRNA ligase alpha subunit (341 aa).

Position 256 (Glu-256) interacts with Mg(2+).

It belongs to the class-II aminoacyl-tRNA synthetase family. Phe-tRNA synthetase alpha subunit type 1 subfamily. As to quaternary structure, tetramer of two alpha and two beta subunits. Mg(2+) serves as cofactor.

The protein localises to the cytoplasm. The enzyme catalyses tRNA(Phe) + L-phenylalanine + ATP = L-phenylalanyl-tRNA(Phe) + AMP + diphosphate + H(+). In Chlamydia muridarum (strain MoPn / Nigg), this protein is Phenylalanine--tRNA ligase alpha subunit (pheS).